The sequence spans 54 residues: Putative neurotoxin-I (54 aa).

Cystine bridges form between C20–C42, C28–C51, and C32–C53.

As to expression, expressed by the venom gland.

It is found in the secreted. The sequence is that of Putative neurotoxin-I from Lychas mucronatus (Chinese swimming scorpion).